We begin with the raw amino-acid sequence, 163 residues long: S-ribosylhomocysteine lyase (163 aa).

Fe cation is bound by residues His54, His58, and Cys128.

This sequence belongs to the LuxS family. As to quaternary structure, homodimer. The cofactor is Fe cation.

The enzyme catalyses S-(5-deoxy-D-ribos-5-yl)-L-homocysteine = (S)-4,5-dihydroxypentane-2,3-dione + L-homocysteine. In terms of biological role, involved in the synthesis of autoinducer 2 (AI-2) which is secreted by bacteria and is used to communicate both the cell density and the metabolic potential of the environment. The regulation of gene expression in response to changes in cell density is called quorum sensing. Catalyzes the transformation of S-ribosylhomocysteine (RHC) to homocysteine (HC) and 4,5-dihydroxy-2,3-pentadione (DPD). This is S-ribosylhomocysteine lyase from Wolinella succinogenes (strain ATCC 29543 / DSM 1740 / CCUG 13145 / JCM 31913 / LMG 7466 / NCTC 11488 / FDC 602W) (Vibrio succinogenes).